The following is a 230-amino-acid chain: 3-beta-hydroxysteroid-Delta(8),Delta(7)-isomerase (230 aa).

T2 carries the post-translational modification N-acetylthreonine. 4 consecutive transmembrane segments (helical) span residues 29–49 (SHIL…TWLL), 66–86 (LCWF…FSLY), 121–141 (METV…IAFL), and 185–205 (FWFY…ILVL). In terms of domain architecture, EXPERA spans 61 to 204 (GRRLALCWFA…VWLVIPSILV (144 aa)).

This sequence belongs to the EBP family.

The protein resides in the endoplasmic reticulum membrane. Its subcellular location is the nucleus envelope. It localises to the cytoplasmic vesicle. The catalysed reaction is lathosterol = 5alpha-cholest-8-en-3beta-ol. It catalyses the reaction zymosterol = 5alpha-cholesta-7,24-dien-3beta-ol. It carries out the reaction 5,6alpha-epoxy-5alpha-cholestan-3beta-ol + H2O = 5alpha-cholestane-3beta,5,6beta-triol. The enzyme catalyses 5,6beta-epoxy-5beta-cholestan-3beta-ol + H2O = 5alpha-cholestane-3beta,5,6beta-triol. It participates in steroid biosynthesis; cholesterol biosynthesis. In terms of biological role, isomerase that catalyzes the conversion of Delta(8)-sterols to their corresponding Delta(7)-isomers. Its function is as follows. Component of the microsomal antiestrogen binding site (AEBS), a multiproteic complex at the ER membrane that consists of an association between EBP and 7-dehydrocholesterol reductase/DHCR7. This complex is responsible for cholesterol-5,6-epoxide hydrolase (ChEH) activity, which consists in the hydration of cholesterol-5,6-epoxides (5,6-EC) into cholestane-3beta,5alpha,6beta-triol (CT). The precise role of each component of this complex has not been described yet. The protein is 3-beta-hydroxysteroid-Delta(8),Delta(7)-isomerase of Mus musculus (Mouse).